The chain runs to 175 residues: MSEQKIEVVGKLGSTYGIRGWLRLYSSTEETESIFDYQPWFLKIKGQWQPIELESWRYHNNDLIVKLKGSDDRESAQLLTNAEIGVDLSVFPELEEGDYYWHDLIGCQVINLEDYSMGVVTELMETGSNDVLVVRANSKDAFGKQERLIPFLYEQVVKRVDLATKTITVDWDAGF.

In terms of domain architecture, PRC barrel spans 96-175; the sequence is EGDYYWHDLI…TITVDWDAGF (80 aa).

This sequence belongs to the RimM family. As to quaternary structure, binds ribosomal protein uS19.

It is found in the cytoplasm. In terms of biological role, an accessory protein needed during the final step in the assembly of 30S ribosomal subunit, possibly for assembly of the head region. Essential for efficient processing of 16S rRNA. May be needed both before and after RbfA during the maturation of 16S rRNA. It has affinity for free ribosomal 30S subunits but not for 70S ribosomes. In Actinobacillus pleuropneumoniae serotype 5b (strain L20), this protein is Ribosome maturation factor RimM.